Consider the following 205-residue polypeptide: Holliday junction branch migration complex subunit RuvA (205 aa).

The interval 1-64 is domain I; it reads MIGKLKGSIE…EDQLKLFGFV (64 aa). A domain II region spans residues 65 to 143; it reads SALEREWFNL…AFAGDASASI (79 aa). Positions 144-153 are flexible linker; the sequence is GLKQELGEGV. The domain III stretch occupies residues 153–205; the sequence is VASAPVADAVSALTNLGYSRDQAANAVAAALKNGGEGGDSAKLIRLGLKELSR.

It belongs to the RuvA family. In terms of assembly, homotetramer. Forms an RuvA(8)-RuvB(12)-Holliday junction (HJ) complex. HJ DNA is sandwiched between 2 RuvA tetramers; dsDNA enters through RuvA and exits via RuvB. An RuvB hexamer assembles on each DNA strand where it exits the tetramer. Each RuvB hexamer is contacted by two RuvA subunits (via domain III) on 2 adjacent RuvB subunits; this complex drives branch migration. In the full resolvosome a probable DNA-RuvA(4)-RuvB(12)-RuvC(2) complex forms which resolves the HJ.

Its subcellular location is the cytoplasm. Its function is as follows. The RuvA-RuvB-RuvC complex processes Holliday junction (HJ) DNA during genetic recombination and DNA repair, while the RuvA-RuvB complex plays an important role in the rescue of blocked DNA replication forks via replication fork reversal (RFR). RuvA specifically binds to HJ cruciform DNA, conferring on it an open structure. The RuvB hexamer acts as an ATP-dependent pump, pulling dsDNA into and through the RuvAB complex. HJ branch migration allows RuvC to scan DNA until it finds its consensus sequence, where it cleaves and resolves the cruciform DNA. In Agrobacterium fabrum (strain C58 / ATCC 33970) (Agrobacterium tumefaciens (strain C58)), this protein is Holliday junction branch migration complex subunit RuvA.